A 198-amino-acid chain; its full sequence is Protoplast secreted protein 2 (198 aa).

The signal sequence occupies residues 1–21; sequence MPRVAIIIYTLYGHVAATAEA. One can recognise a Flavodoxin-like domain in the interval 22–191; sequence EKKGIEAAGG…QVHEIQGKTF (170 aa).

The protein belongs to the WrbA family.

It localises to the secreted. The protein is Protoplast secreted protein 2 (PST2) of Saccharomyces cerevisiae (strain ATCC 204508 / S288c) (Baker's yeast).